Consider the following 149-residue polypeptide: SsrA-binding protein (149 aa).

The protein belongs to the SmpB family.

Its subcellular location is the cytoplasm. Its function is as follows. Required for rescue of stalled ribosomes mediated by trans-translation. Binds to transfer-messenger RNA (tmRNA), required for stable association of tmRNA with ribosomes. tmRNA and SmpB together mimic tRNA shape, replacing the anticodon stem-loop with SmpB. tmRNA is encoded by the ssrA gene; the 2 termini fold to resemble tRNA(Ala) and it encodes a 'tag peptide', a short internal open reading frame. During trans-translation Ala-aminoacylated tmRNA acts like a tRNA, entering the A-site of stalled ribosomes, displacing the stalled mRNA. The ribosome then switches to translate the ORF on the tmRNA; the nascent peptide is terminated with the 'tag peptide' encoded by the tmRNA and targeted for degradation. The ribosome is freed to recommence translation, which seems to be the essential function of trans-translation. The chain is SsrA-binding protein from Anaplasma marginale (strain St. Maries).